We begin with the raw amino-acid sequence, 265 residues long: MALYRTKELVSLVSIMFVLLATNIEALSFNFPKITPGNTAITLQGNAKILANGVLALTNSTQIPPTTTFPSTGRALYSTPVPLWDSATGNVASFVTSFSFVILNPSGRVPTDGLVFFIAPPDTEIPNNSQSQYLGVVDSKTSINRFVGLEFDLYANSFDPYMRHIGIDINSLISTKTVRYNFVSGSLTKVTIIYDSPSNTLTAVITYENGQISTISQNVDLKAVLPKDVSVGFSATSTIAVSHNIHSWSFTSNLEATTGNIVSQV.

The or 23 signal peptide spans 1–21 (MALYRTKELVSLVSIMFVLLA). Residues Asn59 and Asn127 are each glycosylated (N-linked (GlcNAc...) asparagine).

It belongs to the leguminous lectin family. As to quaternary structure, monomer. In terms of tissue distribution, most highly expressed in the epidermal layer of developing shoot tips.

This chain is Non-seed lectin, found in Pisum sativum (Garden pea).